A 382-amino-acid polypeptide reads, in one-letter code: Anhydro-N-acetylmuramic acid kinase (382 aa).

ATP is bound at residue Gly-9 to Asp-16.

It belongs to the anhydro-N-acetylmuramic acid kinase family.

The enzyme catalyses 1,6-anhydro-N-acetyl-beta-muramate + ATP + H2O = N-acetyl-D-muramate 6-phosphate + ADP + H(+). The protein operates within amino-sugar metabolism; 1,6-anhydro-N-acetylmuramate degradation. Its pathway is cell wall biogenesis; peptidoglycan recycling. Functionally, catalyzes the specific phosphorylation of 1,6-anhydro-N-acetylmuramic acid (anhMurNAc) with the simultaneous cleavage of the 1,6-anhydro ring, generating MurNAc-6-P. Is required for the utilization of anhMurNAc either imported from the medium or derived from its own cell wall murein, and thus plays a role in cell wall recycling. The polypeptide is Anhydro-N-acetylmuramic acid kinase (Bacillus cereus (strain AH187)).